Here is a 346-residue protein sequence, read N- to C-terminus: D-erythrose-4-phosphate dehydrogenase (346 aa).

11–12 (RI) contributes to the NAD(+) binding site. Substrate-binding positions include 163 to 165 (SCT), R209, 222 to 223 (TK), and R245. Residue C164 is the Nucleophile of the active site. N327 serves as a coordination point for NAD(+).

This sequence belongs to the glyceraldehyde-3-phosphate dehydrogenase family. Epd subfamily. In terms of assembly, homotetramer.

The protein localises to the cytoplasm. The catalysed reaction is D-erythrose 4-phosphate + NAD(+) + H2O = 4-phospho-D-erythronate + NADH + 2 H(+). It functions in the pathway cofactor biosynthesis; pyridoxine 5'-phosphate biosynthesis; pyridoxine 5'-phosphate from D-erythrose 4-phosphate: step 1/5. In terms of biological role, catalyzes the NAD-dependent conversion of D-erythrose 4-phosphate to 4-phosphoerythronate. In Vibrio vulnificus (strain YJ016), this protein is D-erythrose-4-phosphate dehydrogenase.